The sequence spans 493 residues: Putative lon protease homolog (493 aa).

Glycine 52–serine 59 is a binding site for ATP.

This sequence belongs to the peptidase S16 family.

The sequence is that of Putative lon protease homolog from Thermoplasma acidophilum (strain ATCC 25905 / DSM 1728 / JCM 9062 / NBRC 15155 / AMRC-C165).